The following is a 140-amino-acid chain: uncharacterized protein (140 aa).

This is an uncharacterized protein from Mycoplasma pneumoniae (strain ATCC 29342 / M129 / Subtype 1) (Mycoplasmoides pneumoniae).